We begin with the raw amino-acid sequence, 1099 residues long: Zinc finger protein basonuclin-2 (1099 aa).

The tract at residues 45-66 (EEAEVDVRERETQRDREPKRAR) is disordered. Basic and acidic residues predominate over residues 49–66 (VDVRERETQRDREPKRAR). Lys277 is covalently cross-linked (Glycyl lysine isopeptide (Lys-Gly) (interchain with G-Cter in SUMO2)). Residues 357-385 (LSTQNEYNESSESEVSPTPYKNDQTPNRN) are disordered. The span at 361 to 372 (NEYNESSESEVS) shows a compositional bias: low complexity. Residues 375 to 385 (PYKNDQTPNRN) are compositionally biased toward polar residues. Glycyl lysine isopeptide (Lys-Gly) (interchain with G-Cter in SUMO2) cross-links involve residues Lys396, Lys416, and Lys421. A disordered region spans residues 397-423 (TEPACVSPIQNSAPVSDLTKTEHPKSS). The C2H2-type 1 zinc-finger motif lies at 441–464 (VFCNACGKTFYDKGTLKIHYNAVH). Position 561 is a phosphoserine (Ser561). 2 disordered regions span residues 622-641 (EPSA…MPVK) and 648-742 (DTAD…EGDE). A Glycyl lysine isopeptide (Lys-Gly) (interchain with G-Cter in SUMO2) cross-link involves residue Lys641. The span at 648–661 (DTADEFDDEDDDPN) shows a compositional bias: acidic residues. 2 stretches are compositionally biased toward basic and acidic residues: residues 670 to 680 (MSHDNHCHSQE) and 719 to 742 (ERDY…EGDE). Residues 833–856 (KICYVCKKSFKSSYSVKLHYRNVH) form a C2H2-type 2 zinc finger. Residues Lys894 and Lys919 each participate in a glycyl lysine isopeptide (Lys-Gly) (interchain with G-Cter in SUMO2) cross-link. Disordered regions lie at residues 929–948 (LDVR…HLNG) and 968–1008 (LQSS…KAEA). A compositionally biased stretch (acidic residues) spans 982 to 995 (AGSDEGILLDDIDG). 2 C2H2-type zinc fingers span residues 1035–1058 (IMCN…KTVH) and 1063–1090 (HKCK…PNLH). The segment at 1079–1099 (SRNRHSQNPNLHKNIPFTSVD) is disordered.

In terms of tissue distribution, highly expressed in testis, uterus and small intestine, and weakly expressed in colon and prostate. Also expressed in skin, primary keratinocytes, immortalized keratinocytes, and HeLa and HEK293 cells. Not detected in blood, thymus, spleen or Hep-G2 cells.

It localises to the nucleus. In terms of biological role, probable transcription factor specific for skin keratinocytes. May play a role in the differentiation of spermatozoa and oocytes. May also play an important role in early urinary-tract development. The polypeptide is Zinc finger protein basonuclin-2 (Homo sapiens (Human)).